The following is a 419-amino-acid chain: Serine hydroxymethyltransferase (419 aa).

Residues leucine 118 and glycine 122–leucine 124 each bind (6S)-5,6,7,8-tetrahydrofolate. The residue at position 226 (lysine 226) is an N6-(pyridoxal phosphate)lysine. Glutamate 242 lines the (6S)-5,6,7,8-tetrahydrofolate pocket.

The protein belongs to the SHMT family. In terms of assembly, homodimer. It depends on pyridoxal 5'-phosphate as a cofactor.

The protein resides in the cytoplasm. The enzyme catalyses (6R)-5,10-methylene-5,6,7,8-tetrahydrofolate + glycine + H2O = (6S)-5,6,7,8-tetrahydrofolate + L-serine. It functions in the pathway one-carbon metabolism; tetrahydrofolate interconversion. Its pathway is amino-acid biosynthesis; glycine biosynthesis; glycine from L-serine: step 1/1. In terms of biological role, catalyzes the reversible interconversion of serine and glycine with tetrahydrofolate (THF) serving as the one-carbon carrier. This reaction serves as the major source of one-carbon groups required for the biosynthesis of purines, thymidylate, methionine, and other important biomolecules. Also exhibits THF-independent aldolase activity toward beta-hydroxyamino acids, producing glycine and aldehydes, via a retro-aldol mechanism. The polypeptide is Serine hydroxymethyltransferase (Metamycoplasma arthritidis (strain 158L3-1) (Mycoplasma arthritidis)).